The following is a 211-amino-acid chain: Probable GTP-binding protein EngB (211 aa).

Residues 26 to 200 (SGIEVAFAGR…RQKLDNWFST (175 aa)) enclose the EngB-type G domain. GTP-binding positions include 34–41 (GRSNAGKS), 61–65 (GRTQL), 79–82 (DLPG), 146–149 (TKAD), and 179–181 (FSS). Positions 41 and 63 each coordinate Mg(2+).

This sequence belongs to the TRAFAC class TrmE-Era-EngA-EngB-Septin-like GTPase superfamily. EngB GTPase family. Mg(2+) is required as a cofactor.

Its function is as follows. Necessary for normal cell division and for the maintenance of normal septation. This chain is Probable GTP-binding protein EngB, found in Pectobacterium carotovorum subsp. carotovorum (strain PC1).